A 540-amino-acid chain; its full sequence is Medium/long-chain-fatty-acid--[acyl-carrier-protein] ligase FadD10 (540 aa).

Thr-177 contacts Mg(2+). Positions 226, 316, and 320 each coordinate ATP. Glu-321 provides a ligand contact to Mg(2+). Residue Asp-408 participates in ATP binding.

The protein belongs to the ATP-dependent AMP-binding enzyme family. In terms of assembly, homodimer. It depends on Mg(2+) as a cofactor.

Its subcellular location is the cytoplasm. The enzyme catalyses a medium-chain fatty acid + holo-[ACP] + ATP = a medium-chain fatty acyl-[ACP] + AMP + diphosphate. It carries out the reaction a medium-chain fatty acid + ATP + H(+) = a medium-chain fatty acyl-AMP + diphosphate. The catalysed reaction is a medium-chain fatty acyl-AMP + holo-[ACP] = a medium-chain fatty acyl-[ACP] + AMP + H(+). It catalyses the reaction a long-chain fatty acid + holo-[ACP] + ATP = a long-chain fatty acyl-[ACP] + AMP + diphosphate. The enzyme catalyses a long-chain fatty acid + ATP + H(+) = a long-chain fatty acyl-AMP + diphosphate. It carries out the reaction a long-chain fatty acyl-AMP + holo-[ACP] = a long-chain fatty acyl-[ACP] + AMP + H(+). The catalysed reaction is a (2E)-enoyl fatty acid + holo-[ACP] + ATP = a (2E)-enoyl-[ACP] + AMP + diphosphate. It catalyses the reaction a (2E)-enoyl fatty acid + ATP + H(+) = a (2E)-2-fatty-enoyl-AMP + diphosphate. The enzyme catalyses a (2E)-2-fatty-enoyl-AMP + holo-[ACP] = a (2E)-enoyl-[ACP] + AMP + H(+). It carries out the reaction a (3R)-3-isocyanyl-fatty acid + holo-[ACP] + ATP = a (3R)-3-isocyanyl-fatty acyl-[ACP] + AMP + diphosphate. The catalysed reaction is a (3R)-3-isocyanyl-fatty acid + ATP + H(+) = a (3R)-3-isocyanyl-fatty acyl-AMP + diphosphate. It catalyses the reaction a (3R)-3-isocyanyl-fatty acyl-AMP + holo-[ACP] = a (3R)-3-isocyanyl-fatty acyl-[ACP] + AMP + H(+). It participates in lipid metabolism; fatty acid metabolism. Acyl:acyl-carrier protein ligase involved in the biosynthesis of a unique class of isonitrile lipopeptides (INLPs) that seem to function as virulence factors in M.tuberculosis and to play a role in metal acquisition. Catalyzes the activation of medium/long-chain fatty acids as acyl-adenylates (acyl-AMP), which are then transferred to the phosphopantetheine arm of the acyl-carrier protein (ACP) MT0109. Acts twice during the INLP pathway, catalyzing the activation of a (2E)-enoyl fatty acid as well as the corresponding (3R)-3-isocyanyl-fatty acid as acyl-adenylates (acyl-AMP), and then the acyl transfer to the dedicated acyl-carrier protein MT0109. The polypeptide is Medium/long-chain-fatty-acid--[acyl-carrier-protein] ligase FadD10 (fadD10) (Mycobacterium tuberculosis (strain CDC 1551 / Oshkosh)).